A 913-amino-acid chain; its full sequence is Eukaryotic translation initiation factor 3 subunit C (913 aa).

The segment at 1–22 is disordered; the sequence is MSRFFANGSDSESESSEEEVQA. Residues 11-20 are compositionally biased toward acidic residues; it reads SESESSEEEV. Phosphoserine is present on residues Ser34, Ser165, Ser177, and Ser186. The interval 157-285 is disordered; that stretch reads FREAPDQESD…KRAEDDEDGE (129 aa). A compositionally biased stretch (acidic residues) spans 162–171; the sequence is DQESDVEEGE. Residues 172 to 184 are compositionally biased toward basic and acidic residues; sequence GEPHDSDGDRAGA. Residues 214 to 239 show a composition bias toward acidic residues; sequence DEDDSDDSIDWDSDTESETESSEDEN. Residues 244-263 are compositionally biased toward basic and acidic residues; the sequence is MRERFLKRTTEKEDKDDDKR. Positions 264 to 276 are enriched in basic residues; it reads KDKRKEQKHKVRK. Residues 645–821 enclose the PCI domain; sequence FHMHINLELL…ETVVMHRSEP (177 aa). The disordered stretch occupies residues 856–913; that stretch reads RGNMGNRDRGYNRNQNNQGGNWGGQRRDNRNQRNRNQRGHHKQQQQQQQQQVQTIEEE. Residues 887-898 show a composition bias toward basic residues; the sequence is QRNRNQRGHHKQ.

This sequence belongs to the eIF-3 subunit C family. As to quaternary structure, component of the eukaryotic translation initiation factor 3 (eIF-3) complex. The eIF-3 complex interacts with pix.

It localises to the cytoplasm. In terms of biological role, component of the eukaryotic translation initiation factor 3 (eIF-3) complex, which is involved in protein synthesis of a specialized repertoire of mRNAs and, together with other initiation factors, stimulates binding of mRNA and methionyl-tRNAi to the 40S ribosome. The eIF-3 complex specifically targets and initiates translation of a subset of mRNAs involved in cell proliferation. The sequence is that of Eukaryotic translation initiation factor 3 subunit C from Drosophila mojavensis (Fruit fly).